A 164-amino-acid polypeptide reads, in one-letter code: Crossover junction endodeoxyribonuclease RuvC (164 aa).

Active-site residues include Asp-7, Glu-67, and Asp-140. Positions 7, 67, and 140 each coordinate Mg(2+).

The protein belongs to the RuvC family. As to quaternary structure, homodimer which binds Holliday junction (HJ) DNA. The HJ becomes 2-fold symmetrical on binding to RuvC with unstacked arms; it has a different conformation from HJ DNA in complex with RuvA. In the full resolvosome a probable DNA-RuvA(4)-RuvB(12)-RuvC(2) complex forms which resolves the HJ. It depends on Mg(2+) as a cofactor.

It localises to the cytoplasm. The enzyme catalyses Endonucleolytic cleavage at a junction such as a reciprocal single-stranded crossover between two homologous DNA duplexes (Holliday junction).. The RuvA-RuvB-RuvC complex processes Holliday junction (HJ) DNA during genetic recombination and DNA repair. Endonuclease that resolves HJ intermediates. Cleaves cruciform DNA by making single-stranded nicks across the HJ at symmetrical positions within the homologous arms, yielding a 5'-phosphate and a 3'-hydroxyl group; requires a central core of homology in the junction. The consensus cleavage sequence is 5'-(A/T)TT(C/G)-3'. Cleavage occurs on the 3'-side of the TT dinucleotide at the point of strand exchange. HJ branch migration catalyzed by RuvA-RuvB allows RuvC to scan DNA until it finds its consensus sequence, where it cleaves and resolves the cruciform DNA. The sequence is that of Crossover junction endodeoxyribonuclease RuvC from Alkaliphilus oremlandii (strain OhILAs) (Clostridium oremlandii (strain OhILAs)).